Here is a 361-residue protein sequence, read N- to C-terminus: Nicotinate-nucleotide--dimethylbenzimidazole phosphoribosyltransferase (361 aa).

Catalysis depends on Glu-320, which acts as the Proton acceptor.

This sequence belongs to the CobT family. Homodimer.

It catalyses the reaction 5,6-dimethylbenzimidazole + nicotinate beta-D-ribonucleotide = alpha-ribazole 5'-phosphate + nicotinate + H(+). The protein operates within nucleoside biosynthesis; alpha-ribazole biosynthesis; alpha-ribazole from 5,6-dimethylbenzimidazole: step 1/2. Its function is as follows. Catalyzes the synthesis of alpha-ribazole-5'-phosphate from nicotinate mononucleotide (NAMN) and 5,6-dimethylbenzimidazole (DMB). This Shigella boydii serotype 18 (strain CDC 3083-94 / BS512) protein is Nicotinate-nucleotide--dimethylbenzimidazole phosphoribosyltransferase.